Reading from the N-terminus, the 227-residue chain is 7-cyano-7-deazaguanine synthase (227 aa).

7-17 lines the ATP pocket; it reads VSGGMDSLVAT. Zn(2+)-binding residues include Cys187, Cys195, Cys198, and Cys201.

This sequence belongs to the QueC family. The cofactor is Zn(2+).

It catalyses the reaction 7-carboxy-7-deazaguanine + NH4(+) + ATP = 7-cyano-7-deazaguanine + ADP + phosphate + H2O + H(+). The protein operates within purine metabolism; 7-cyano-7-deazaguanine biosynthesis. Its function is as follows. Catalyzes the ATP-dependent conversion of 7-carboxy-7-deazaguanine (CDG) to 7-cyano-7-deazaguanine (preQ(0)). The protein is 7-cyano-7-deazaguanine synthase of Chlorobaculum parvum (strain DSM 263 / NCIMB 8327) (Chlorobium vibrioforme subsp. thiosulfatophilum).